Here is a 228-residue protein sequence, read N- to C-terminus: 7-cyano-7-deazaguanine synthase (228 aa).

13-23 (LSGGMDSTLSS) contributes to the ATP binding site. C192, C200, C203, and C206 together coordinate Zn(2+).

This sequence belongs to the QueC family. Zn(2+) serves as cofactor.

The catalysed reaction is 7-carboxy-7-deazaguanine + NH4(+) + ATP = 7-cyano-7-deazaguanine + ADP + phosphate + H2O + H(+). It functions in the pathway purine metabolism; 7-cyano-7-deazaguanine biosynthesis. Its function is as follows. Catalyzes the ATP-dependent conversion of 7-carboxy-7-deazaguanine (CDG) to 7-cyano-7-deazaguanine (preQ(0)). The sequence is that of 7-cyano-7-deazaguanine synthase from Aliarcobacter butzleri (strain RM4018) (Arcobacter butzleri).